An 83-amino-acid chain; its full sequence is RNA-binding protein Hfq (83 aa).

The 60-residue stretch at 9 to 68 (DPYLNALRKERIPVSIFLVNGIKLQGQIESFDQFVILLKNTVSQMVYKHAISTVVPARNV) folds into the Sm domain.

It belongs to the Hfq family. Homohexamer.

Functionally, RNA chaperone that binds small regulatory RNA (sRNAs) and mRNAs to facilitate mRNA translational regulation in response to envelope stress, environmental stress and changes in metabolite concentrations. Also binds with high specificity to tRNAs. In Hahella chejuensis (strain KCTC 2396), this protein is RNA-binding protein Hfq.